A 330-amino-acid chain; its full sequence is Glycerol-3-phosphate dehydrogenase [NAD(P)+] (330 aa).

NADPH is bound by residues Ser-10, Trp-11, Arg-31, and Lys-105. Residues Lys-105, Gly-135, and Ser-137 each contribute to the sn-glycerol 3-phosphate site. NADPH is bound at residue Ala-139. Lys-190, Asp-243, Ser-253, Arg-254, and Asn-255 together coordinate sn-glycerol 3-phosphate. Catalysis depends on Lys-190, which acts as the Proton acceptor. Residue Arg-254 coordinates NADPH. NADPH is bound by residues Val-278 and Glu-280.

This sequence belongs to the NAD-dependent glycerol-3-phosphate dehydrogenase family.

It localises to the cytoplasm. The enzyme catalyses sn-glycerol 3-phosphate + NAD(+) = dihydroxyacetone phosphate + NADH + H(+). The catalysed reaction is sn-glycerol 3-phosphate + NADP(+) = dihydroxyacetone phosphate + NADPH + H(+). It functions in the pathway membrane lipid metabolism; glycerophospholipid metabolism. Functionally, catalyzes the reduction of the glycolytic intermediate dihydroxyacetone phosphate (DHAP) to sn-glycerol 3-phosphate (G3P), the key precursor for phospholipid synthesis. This is Glycerol-3-phosphate dehydrogenase [NAD(P)+] from Nitratidesulfovibrio vulgaris (strain DP4) (Desulfovibrio vulgaris).